The sequence spans 263 residues: Proteasome subunit alpha type-1 (263 aa).

Residue Met1 is modified to N-acetylmethionine. Ser110 carries the post-translational modification Phosphoserine; alternate. A glycan (O-linked (GlcNAc) serine; alternate) is linked at Ser110. Lys115 participates in a covalent cross-link: Glycyl lysine isopeptide (Lys-Gly) (interchain with G-Cter in ubiquitin). Position 177 is a phosphoserine (Ser177). A Glycyl lysine isopeptide (Lys-Gly) (interchain with G-Cter in ubiquitin) cross-link involves residue Lys208. Positions 232–263 (FLEGLEERPQRKAQPAQPADEPAEKADEPMEH) are disordered. The span at 253–263 (PAEKADEPMEH) shows a compositional bias: basic and acidic residues.

It belongs to the peptidase T1A family. In terms of assembly, the 26S proteasome consists of a 20S proteasome core and two 19S regulatory subunits. The 20S proteasome core is a barrel-shaped complex made of 28 subunits that are arranged in four stacked rings. The two outer rings are each formed by seven alpha subunits, and the two inner rings are formed by seven beta subunits. The proteolytic activity is exerted by three beta-subunits PSMB5, PSMB6 and PSMB7. Interacts with NOTCH3. Interacts with ZFAND1.

The protein resides in the cytoplasm. It is found in the nucleus. In terms of biological role, component of the 20S core proteasome complex involved in the proteolytic degradation of most intracellular proteins. This complex plays numerous essential roles within the cell by associating with different regulatory particles. Associated with two 19S regulatory particles, forms the 26S proteasome and thus participates in the ATP-dependent degradation of ubiquitinated proteins. The 26S proteasome plays a key role in the maintenance of protein homeostasis by removing misfolded or damaged proteins that could impair cellular functions, and by removing proteins whose functions are no longer required. Associated with the PA200 or PA28, the 20S proteasome mediates ubiquitin-independent protein degradation. This type of proteolysis is required in several pathways including spermatogenesis (20S-PA200 complex) or generation of a subset of MHC class I-presented antigenic peptides (20S-PA28 complex). This is Proteasome subunit alpha type-1 (PSMA1) from Macaca fascicularis (Crab-eating macaque).